The chain runs to 577 residues: Phosphatidylinositol/phosphatidylcholine transfer protein SFH14 (577 aa).

Residues 1 to 22 (MSGREQTGEKLSDSEYIEEEPR) form a disordered region. Residues 136 to 311 (ELDEVTRHYP…FLGGLCKCPN (176 aa)) enclose the CRAL-TRIO domain. Residues 364–383 (ETLKEEPEPEEYYSSTGSRS) are disordered. Positions 523–550 (EANEKLLAESLERIKSLELDLDKTKSVL) form a coiled coil.

Belongs to the SFH family.

The protein resides in the golgi apparatus membrane. Its subcellular location is the cell membrane. Its function is as follows. Required for transport of secretory proteins from the Golgi complex. Catalyzes the transfer of phosphatidylinositol and phosphatidylcholine between membranes in vitro. The protein is Phosphatidylinositol/phosphatidylcholine transfer protein SFH14 (SFH14) of Arabidopsis thaliana (Mouse-ear cress).